The following is a 293-amino-acid chain: Aspartate carbamoyltransferase catalytic subunit (293 aa).

Carbamoyl phosphate-binding residues include Arg50 and Thr51. An L-aspartate-binding site is contributed by Lys78. Arg100, His127, and Gln130 together coordinate carbamoyl phosphate. 2 residues coordinate L-aspartate: Arg160 and Arg210. 2 residues coordinate carbamoyl phosphate: Ala253 and Pro254.

This sequence belongs to the aspartate/ornithine carbamoyltransferase superfamily. ATCase family. In terms of assembly, heterododecamer (2C3:3R2) of six catalytic PyrB chains organized as two trimers (C3), and six regulatory PyrI chains organized as three dimers (R2).

It carries out the reaction carbamoyl phosphate + L-aspartate = N-carbamoyl-L-aspartate + phosphate + H(+). Its pathway is pyrimidine metabolism; UMP biosynthesis via de novo pathway; (S)-dihydroorotate from bicarbonate: step 2/3. In terms of biological role, catalyzes the condensation of carbamoyl phosphate and aspartate to form carbamoyl aspartate and inorganic phosphate, the committed step in the de novo pyrimidine nucleotide biosynthesis pathway. This is Aspartate carbamoyltransferase catalytic subunit from Staphylococcus epidermidis (strain ATCC 12228 / FDA PCI 1200).